Consider the following 438-residue polypeptide: UDP-N-acetylglucosamine 1-carboxyvinyltransferase 1 (438 aa).

22–23 (KN) contributes to the phosphoenolpyruvate binding site. Residue arginine 95 coordinates UDP-N-acetyl-alpha-D-glucosamine. The active-site Proton donor is the cysteine 119. Cysteine 119 is modified (2-(S-cysteinyl)pyruvic acid O-phosphothioketal). UDP-N-acetyl-alpha-D-glucosamine contacts are provided by residues 124 to 128 (RPIDL), aspartate 307, and valine 329.

Belongs to the EPSP synthase family. MurA subfamily.

The protein localises to the cytoplasm. It catalyses the reaction phosphoenolpyruvate + UDP-N-acetyl-alpha-D-glucosamine = UDP-N-acetyl-3-O-(1-carboxyvinyl)-alpha-D-glucosamine + phosphate. Its pathway is cell wall biogenesis; peptidoglycan biosynthesis. Functionally, cell wall formation. Adds enolpyruvyl to UDP-N-acetylglucosamine. This chain is UDP-N-acetylglucosamine 1-carboxyvinyltransferase 1, found in Lactiplantibacillus plantarum (strain ATCC BAA-793 / NCIMB 8826 / WCFS1) (Lactobacillus plantarum).